Consider the following 249-residue polypeptide: Ribosomal RNA small subunit methyltransferase G (249 aa).

S-adenosyl-L-methionine-binding positions include G88, F93, 111 to 113 (DAT), 139 to 140 (AE), and R158.

It belongs to the methyltransferase superfamily. RNA methyltransferase RsmG family.

The protein localises to the cytoplasm. Functionally, specifically methylates the N7 position of a guanine in 16S rRNA. This is Ribosomal RNA small subunit methyltransferase G from Thermus thermophilus (strain ATCC BAA-163 / DSM 7039 / HB27).